Reading from the N-terminus, the 537-residue chain is Light-independent protochlorophyllide reductase subunit B (537 aa).

Aspartate 36 contacts [4Fe-4S] cluster. The Proton donor role is filled by aspartate 292. 428 to 429 (GL) is a binding site for substrate. Positions 459–483 (TAGETAGQATEAATAPATPGAPLTG) are disordered.

It belongs to the ChlB/BchB/BchZ family. As to quaternary structure, protochlorophyllide reductase is composed of three subunits; BchL, BchN and BchB. Forms a heterotetramer of two BchB and two BchN subunits. Requires [4Fe-4S] cluster as cofactor.

It catalyses the reaction chlorophyllide a + oxidized 2[4Fe-4S]-[ferredoxin] + 2 ADP + 2 phosphate = protochlorophyllide a + reduced 2[4Fe-4S]-[ferredoxin] + 2 ATP + 2 H2O. It functions in the pathway porphyrin-containing compound metabolism; bacteriochlorophyll biosynthesis (light-independent). Functionally, component of the dark-operative protochlorophyllide reductase (DPOR) that uses Mg-ATP and reduced ferredoxin to reduce ring D of protochlorophyllide (Pchlide) to form chlorophyllide a (Chlide). This reaction is light-independent. The NB-protein (BchN-BchB) is the catalytic component of the complex. This Chloroherpeton thalassium (strain ATCC 35110 / GB-78) protein is Light-independent protochlorophyllide reductase subunit B.